Here is a 35-residue protein sequence, read N- to C-terminus: Antimicrobial peptide 3 (35 aa).

A Chitin-binding type-1 domain is found at 4-35 (GGECGGRFGGCAGGQCCSRFGFCGSGPKYCAH). Disulfide bonds link Cys7–Cys20, Cys14–Cys26, and Cys19–Cys33.

In terms of processing, contains 3 disulfide bonds. As to expression, expressed in leaf, flower, stem and seed with highest expression in leaf (at protein level).

Has antifungal activity against A.niger (IC(50)=5.4 uM), B.sorokiniana (IC(50)=2.0 uM), B.cinerea (IC(50)=1.6 uM), F.solani (IC(50)=3.7 uM) and A.alternata (IC(50)=5.0 uM). Binds chitin in vitro. Has no antibacterial activity at concentrations up to 10 uM. This is Antimicrobial peptide 3 from Stellaria media (Common chickweed).